Here is a 295-residue protein sequence, read N- to C-terminus: Mitochondrial dicarboxylate transporter (295 aa).

Solcar repeat units follow at residues 4 to 88, 96 to 188, and 198 to 286; these read KQVK…LKEH, TNMW…FKNF, and KKNS…LKKY. The next 6 membrane-spanning stretches (helical) occupy residues 8–24, 63–82, 98–122, 163–182, 204–224, and 262–280; these read YPWW…VMNT, GLSA…FGMY, MWYL…ADLI, GWKP…VVTY, LTSS…ADVI, and WVPS…FFAM.

Belongs to the mitochondrial carrier (TC 2.A.29) family. As to quaternary structure, homodimer.

It is found in the mitochondrion inner membrane. Mitochondrial dicarboxylic transporter catalyzing the exchange of dicarboxylic acids like malate and succinate for inorganic phosphate. Required for growth on ethanol and acetate. The polypeptide is Mitochondrial dicarboxylate transporter (DIC1) (Candida glabrata (strain ATCC 2001 / BCRC 20586 / JCM 3761 / NBRC 0622 / NRRL Y-65 / CBS 138) (Yeast)).